The sequence spans 259 residues: Short-chain dehydrogenase chry4 (259 aa).

Residues arginine 37, aspartate 55, asparagine 81, tyrosine 154, lysine 158, valine 185, and threonine 187 each contribute to the NADP(+) site. Catalysis depends on tyrosine 154, which acts as the Proton donor. The active-site Lowers pKa of active site Tyr is the lysine 158.

The protein belongs to the short-chain dehydrogenases/reductases (SDR) family.

It functions in the pathway pigment biosynthesis. Functionally, short-chain dehydrogenase; part of the gene cluster that mediates the biosynthesis of the yellow pigment chrysogine. Pyruvic acid and anthranilic acid are likely substrates for the nonribosomal peptide synthetase chry1/NRPS14, with pyruvic acid adenylated by the first A domain and anthranilic acid by the second. If pyruvic acid and anthranilic acid are merged and released from chry1/NRPS14 by hydrolysis, a subsequent amidation would lead to 2-pyruvoylaminobenzamide. This process is probably catalyzed by the amidotransferase chry2 using glutamine as amino donor. The dehydrogenase chry5 that has a terminal berberine bridge domain for C-N cyclization could catalyze the cyclization of 2-pyruvoylaminobenzamide to yield acetyl-4(3H)-quinazolidinone. A final reduction of acetyl-4(3H)-quinazolidinone catalyzed by the oxidoreductase chry4 would result in chrysogine. The sequence is that of Short-chain dehydrogenase chry4 from Gibberella zeae (strain ATCC MYA-4620 / CBS 123657 / FGSC 9075 / NRRL 31084 / PH-1) (Wheat head blight fungus).